The primary structure comprises 29 residues: Trypsin inhibitor 1 (29 aa).

3 disulfide bridges follow: C3/C20, C10/C22, and C16/C28.

The protein belongs to the protease inhibitor I7 (squash-type serine protease inhibitor) family.

The protein localises to the secreted. In terms of biological role, inhibits trypsin. The polypeptide is Trypsin inhibitor 1 (Cucurbita maxima (Pumpkin)).